An 81-amino-acid chain; its full sequence is uncharacterized protein (81 aa).

Residues 46–81 are disordered; the sequence is ASSPVVKRKSLVKRKSPVKRSPLKKRSQMRTSPCEA. Positions 51–73 are enriched in basic residues; it reads VKRKSLVKRKSPVKRSPLKKRSQ.

This is an uncharacterized protein from Frog virus 3 (isolate Goorha) (FV-3).